A 294-amino-acid chain; its full sequence is Energy-coupling factor transporter ATP-binding protein EcfA1 (294 aa).

The ABC transporter domain maps to 27–260; that stretch reads IEFENVYFAY…EERLLKMQLD (234 aa). 60-67 is a binding site for ATP; it reads GHNGSGKS.

The protein belongs to the ABC transporter superfamily. Energy-coupling factor EcfA family. In terms of assembly, forms a stable energy-coupling factor (ECF) transporter complex composed of 2 membrane-embedded substrate-binding proteins (S component), 2 ATP-binding proteins (A component) and 2 transmembrane proteins (T component).

It is found in the cell membrane. Its function is as follows. ATP-binding (A) component of a common energy-coupling factor (ECF) ABC-transporter complex. Unlike classic ABC transporters this ECF transporter provides the energy necessary to transport a number of different substrates. The protein is Energy-coupling factor transporter ATP-binding protein EcfA1 of Ureaplasma parvum serovar 3 (strain ATCC 700970).